The sequence spans 782 residues: uncharacterized protein (782 aa).

The zn(2)-C6 fungal-type DNA-binding region spans 22 to 50; the sequence is CRECHRLKLKCDRVWPCENCKKRGIPNLC. 2 disordered regions span residues 105-126 and 645-665; these read GEKP…DPDH and VPSS…AEKA. Residues 654–665 are compositionally biased toward basic and acidic residues; it reads SPDDSSMRAEKA.

It localises to the nucleus. This is an uncharacterized protein from Schizosaccharomyces pombe (strain 972 / ATCC 24843) (Fission yeast).